The following is an 87-amino-acid chain: uncharacterized protein (87 aa).

A helical transmembrane segment spans residues 48-70 (GIYIPHTLIFWMCPRAMGTAITF).

The protein localises to the host membrane. This is an uncharacterized protein from Gallid herpesvirus 2 (strain Chicken/Md5/ATCC VR-987) (GaHV-2).